Consider the following 308-residue polypeptide: Serine/threonine-protein phosphatase 4 catalytic subunit (308 aa).

Mn(2+) is bound by residues aspartate 51, histidine 53, aspartate 79, and asparagine 111. Catalysis depends on histidine 112, which acts as the Proton donor. 2 residues coordinate Mn(2+): histidine 161 and histidine 235.

This sequence belongs to the PPP phosphatase family. PP-4 (PP-X) subfamily. As to quaternary structure, catalytic subunit of the histone H2A phosphatase complex (HTP-C) containing PPH3, PSY2 and PSY4. Inactivated in a complex with phosphatase methylesterase PPE1 (PP2Ai). Interacts with phosphatase 2A activator RRD1, which can reactivate PP2Ai by dissociating the catalytic subunit from the complex. Interacts with SPT5 and TAP42. The cofactor is Mn(2+). In terms of processing, reversibly methyl esterified on Leu-308 by leucine carboxyl methyltransferase 1 (PPM1) and protein phosphatase methylesterase 1 (PPE1). Carboxyl methylation influences the affinity of the catalytic subunit for the different regulatory subunits, thereby modulating the PP2A holoenzyme's substrate specificity, enzyme activity and cellular localization.

The protein localises to the cytoplasm. Its subcellular location is the nucleus. It catalyses the reaction O-phospho-L-seryl-[protein] + H2O = L-seryl-[protein] + phosphate. It carries out the reaction O-phospho-L-threonyl-[protein] + H2O = L-threonyl-[protein] + phosphate. Functionally, forms the histone H2A phosphatase complex in association with the regulatory subunits PSY2 and PSY4, which dephosphorylates H2AS128ph (gamma-H2A) that has been displaced from sites of DNA lesions in the double-stranded DNA break repair process. Dephosphorylation is necessary for efficient recovery from the DNA damage checkpoint. PPH3 is directly involved in the dephosphorylation and activation of the transcription factor GLN3 in response to nutrient availability. The polypeptide is Serine/threonine-protein phosphatase 4 catalytic subunit (PPH3) (Saccharomyces cerevisiae (strain ATCC 204508 / S288c) (Baker's yeast)).